Here is a 567-residue protein sequence, read N- to C-terminus: Allo-aromadendrene synthase TPS4FN (567 aa).

(2E,6E)-farnesyl diphosphate-binding residues include R282, D319, D323, R462, and D465. The Mg(2+) site is built by D319 and D323. The DDXXD motif motif lies at 319–323 (DDIYD). Residues D465 and E473 each contribute to the Mg(2+) site.

The protein belongs to the terpene synthase family. Tpsb subfamily. The cofactor is Mg(2+). Mn(2+) is required as a cofactor.

The catalysed reaction is (2E,6E)-farnesyl diphosphate = alpha-humulene + diphosphate. It catalyses the reaction (2E,6E)-farnesyl diphosphate = (+)-valencene + diphosphate. The enzyme catalyses (2E)-geranyl diphosphate = beta-myrcene + diphosphate. It carries out the reaction (2E,6E)-farnesyl diphosphate = allo-aromadendrene + diphosphate. The catalysed reaction is (2E,6E)-farnesyl diphosphate + H2O = palustrol + diphosphate. The protein operates within secondary metabolite biosynthesis; terpenoid biosynthesis. Its function is as follows. Involved in sesquiterpene olefins biosynthesis, constituants of cannabinoids and terpenoids-rich resins. Catalyzes mainly the conversion of (2E)-farnesyl diphosphate to allo-aromadendrene, and also produces minor products such as alpha-humulene, valencene and palustrol. Can also use (2E)-geranyl diphosphate as substrate with low efficiency, producing minor amounts of myrcene. The sequence is that of Allo-aromadendrene synthase TPS4FN from Cannabis sativa (Hemp).